A 295-amino-acid chain; its full sequence is Protease HtpX homolog (295 aa).

2 helical membrane-spanning segments follow: residues 6 to 26 and 40 to 60; these read IGLF…VTSV and LSSL…VSLL. Histidine 148 provides a ligand contact to Zn(2+). Residue glutamate 149 is part of the active site. Histidine 152 is a Zn(2+) binding site. 2 helical membrane passes run 163-183 and 198-218; these read LIQG…SYAL and IANI…VAYF. Glutamate 223 is a Zn(2+) binding site.

This sequence belongs to the peptidase M48B family. Zn(2+) is required as a cofactor.

Its subcellular location is the cell inner membrane. This is Protease HtpX homolog from Leptospira interrogans serogroup Icterohaemorrhagiae serovar copenhageni (strain Fiocruz L1-130).